The following is a 505-amino-acid chain: MFS-type transporter oryN (505 aa).

Residues 1 to 54 form a disordered region; that stretch reads MAVAELPNIVSTDSSPSPHPGSRLSSEPTDIESQKAPSNAEPKTDPNLVTWDGP. 13 helical membrane passes run 69-89, 106-126, 135-155, 166-186, 193-213, 226-246, 280-300, 301-321, 337-357, 376-396, 401-421, 440-460, and 468-488; these read AFVT…SSIF, VVTL…PVWG, KWPM…VAVA, FLTG…LVDM, GVAM…APLM, FTQW…VFGL, GIKD…VTEP, ILLL…LVFV, ISAL…AIVV, LPLM…FAWT, IHWA…YMVF, IGAN…FGPF, and AWAS…PVLF.

Belongs to the major facilitator superfamily. CAR1 family.

It localises to the membrane. In terms of biological role, MFS-type transporter; part of the gene cluster that mediates the biosynthesis of oryzines, natural products with an unusual maleidride backbone. This is MFS-type transporter oryN from Aspergillus oryzae (strain ATCC 42149 / RIB 40) (Yellow koji mold).